Consider the following 337-residue polypeptide: Phenylalanine--tRNA ligase alpha subunit (337 aa).

Residue glutamate 252 participates in Mg(2+) binding.

Belongs to the class-II aminoacyl-tRNA synthetase family. Phe-tRNA synthetase alpha subunit type 1 subfamily. In terms of assembly, tetramer of two alpha and two beta subunits. Requires Mg(2+) as cofactor.

Its subcellular location is the cytoplasm. The catalysed reaction is tRNA(Phe) + L-phenylalanine + ATP = L-phenylalanyl-tRNA(Phe) + AMP + diphosphate + H(+). This Francisella tularensis subsp. mediasiatica (strain FSC147) protein is Phenylalanine--tRNA ligase alpha subunit.